The following is a 512-amino-acid chain: ATP synthase subunit alpha (512 aa).

169-176 contributes to the ATP binding site; it reads GDRQTGKT.

Belongs to the ATPase alpha/beta chains family. In terms of assembly, F-type ATPases have 2 components, CF(1) - the catalytic core - and CF(0) - the membrane proton channel. CF(1) has five subunits: alpha(3), beta(3), gamma(1), delta(1), epsilon(1). CF(0) has four main subunits: a(1), b(1), b'(1) and c(9-12).

Its subcellular location is the cell inner membrane. The catalysed reaction is ATP + H2O + 4 H(+)(in) = ADP + phosphate + 5 H(+)(out). In terms of biological role, produces ATP from ADP in the presence of a proton gradient across the membrane. The alpha chain is a regulatory subunit. This is ATP synthase subunit alpha from Jannaschia sp. (strain CCS1).